Consider the following 207-residue polypeptide: Large ribosomal subunit protein uL4 (207 aa).

The tract at residues 49–78 (HAVKNRSAVRGGGRKPWRQKGTGRARQGSI) is disordered. Positions 60-71 (GGRKPWRQKGTG) are enriched in basic residues.

The protein belongs to the universal ribosomal protein uL4 family. Part of the 50S ribosomal subunit.

One of the primary rRNA binding proteins, this protein initially binds near the 5'-end of the 23S rRNA. It is important during the early stages of 50S assembly. It makes multiple contacts with different domains of the 23S rRNA in the assembled 50S subunit and ribosome. Functionally, forms part of the polypeptide exit tunnel. The protein is Large ribosomal subunit protein uL4 of Latilactobacillus sakei subsp. sakei (strain 23K) (Lactobacillus sakei subsp. sakei).